Consider the following 696-residue polypeptide: Putative cyclic nucleotide-gated ion channel 13 (696 aa).

Over Met-1 to Lys-81 the chain is Cytoplasmic. Residues Lys-45–Gln-65 form a disordered region. A helical transmembrane segment spans residues Ile-82–Ile-102. The Extracellular segment spans residues Val-103 to Leu-116. Residues Glu-117 to Phe-137 traverse the membrane as a helical segment. At Gln-138 to Ser-170 the chain is on the cytoplasmic side. The chain crosses the membrane as a helical span at residues Tyr-171–Ile-191. Residues Pro-192 to Asp-204 lie on the Extracellular side of the membrane. A helical transmembrane segment spans residues Tyr-205–Tyr-225. Topologically, residues Thr-226–Ala-243 are cytoplasmic. Residues Ala-244–Ile-264 form a helical membrane-spanning segment. Topologically, residues Ser-265–Val-367 are extracellular. A helical transmembrane segment spans residues Gly-368–Ile-388. Residues Gly-389 to Pro-696 lie on the Cytoplasmic side of the membrane. Residues Leu-474–Leu-598 and Glu-545 each bind a nucleoside 3',5'-cyclic phosphate. Residues Phe-590 to Tyr-605 are calmodulin-binding. The IQ domain maps to Arg-610–Arg-639. The interval Asn-677 to Pro-696 is disordered.

It belongs to the cyclic nucleotide-gated cation channel (TC 1.A.1.5) family. Homotetramer or heterotetramer.

The protein resides in the cell membrane. Putative cyclic nucleotide-gated ion channel. The sequence is that of Putative cyclic nucleotide-gated ion channel 13 (CNGC13) from Arabidopsis thaliana (Mouse-ear cress).